We begin with the raw amino-acid sequence, 154 residues long: Protein X (154 aa).

The tract at residues 68–117 is mitochondrial targeting sequence; it reads PCALRFTSARRMETTVNAPQSLPTTLHKRTLGLSPRSTTWIEEYIKDCVF.

This sequence belongs to the orthohepadnavirus protein X family. In terms of assembly, may form homodimer. May interact with host CEBPA, CFLAR, CREB1, DDB1, E4F1, HBXIP, HSPD1/HSP60, NFKBIA, POLR2E and SMAD4. Interacts with host SMC5-SMC6 complex and induces its degradation. Interacts with host TRPC4AP; leading to prevent ubiquitination of TRPC4AP. Interacts with host PLSCR1; this interaction promotes ubiquitination and degradation of HBx and impairs HBx-mediated cell proliferation. In terms of processing, a fraction may be phosphorylated in insect cells and HepG2 cells, a human hepatoblastoma cell line. Phosphorylated in vitro by host protein kinase C or mitogen-activated protein kinase. N-acetylated in insect cells.

Its subcellular location is the host cytoplasm. It is found in the host nucleus. It localises to the host mitochondrion. Its function is as follows. Multifunctional protein that plays a role in silencing host antiviral defenses and promoting viral transcription. Does not seem to be essential for HBV infection. May be directly involved in development of cirrhosis and liver cancer (hepatocellular carcinoma). Most of cytosolic activities involve modulation of cytosolic calcium. The effect on apoptosis is controversial depending on the cell types in which the studies have been conducted. May induce apoptosis by localizing in mitochondria and causing loss of mitochondrial membrane potential. May also modulate apoptosis by binding host CFLAR, a key regulator of the death-inducing signaling complex (DISC). Promotes viral transcription by using the host E3 ubiquitin ligase DDB1 to target the SMC5-SMC6 complex to proteasomal degradation. This host complex would otherwise bind to viral episomal DNA, and prevents its transcription. Moderately stimulates transcription of many different viral and cellular transcription elements. Promoters and enhancers stimulated by HBx contain DNA binding sites for NF-kappa-B, AP-1, AP-2, c-EBP, ATF/CREB, or the calcium-activated factor NF-AT. This Hepatitis B virus genotype H subtype adw4 (isolate Nicaragua/2928Nic/1997) (HBV-H) protein is Protein X.